We begin with the raw amino-acid sequence, 551 residues long: Palmdelphin (551 aa).

Met1 is modified (N-acetylmethionine). Residues 12–106 (QAITDKRKIQ…LQISANEEAI (95 aa)) are a coiled coil. Lys125 participates in a covalent cross-link: Glycyl lysine isopeptide (Lys-Gly) (interchain with G-Cter in SUMO2). Ser135 carries the phosphoserine modification. Residue Lys178 forms a Glycyl lysine isopeptide (Lys-Gly) (interchain with G-Cter in SUMO1); alternate linkage. Lys178 is covalently cross-linked (Glycyl lysine isopeptide (Lys-Gly) (interchain with G-Cter in SUMO2); alternate). Residues 247 to 258 (ERNSKSPTEYHE) show a composition bias toward basic and acidic residues. Residues 247–266 (ERNSKSPTEYHEPVYANPFC) form a disordered region. Position 270 is a phosphothreonine (Thr270). 2 disordered regions span residues 294–390 (LGNH…TCQE) and 451–533 (AEDN…GTED). Ser321 and Ser349 each carry phosphoserine. Polar residues predominate over residues 341-353 (HTQQKRMASPWEE). The segment covering 354-365 (SSNRQNEHEVSP) has biased composition (basic and acidic residues). Phosphoserine is present on residues Ser370, Ser375, Ser384, Ser385, Ser498, Ser515, and Ser520.

Belongs to the paralemmin family. In terms of assembly, interacts with GLUL. Phosphorylated. As to expression, ubiquitous. Expressed at highest levels in the heart and lung.

The protein localises to the cytoplasm. The protein resides in the cell projection. It is found in the dendrite. Its subcellular location is the dendritic spine. This is Palmdelphin (Palmd) from Mus musculus (Mouse).